A 262-amino-acid polypeptide reads, in one-letter code: T-cell surface glycoprotein YE1/48 (262 aa).

Topologically, residues 1 to 44 (MSEQEVTYSMVRFHKSAGLQKQVRPEETKGPREAGYRRCSFHWK) are cytoplasmic. Residues 45–66 (FIVIALGIFCFLLLVAVSVLAI) form a helical; Signal-anchor for type II membrane protein membrane-spanning segment. Topologically, residues 67 to 262 (KIFQYDQQKN…CGKRLDKFPH (196 aa)) are extracellular. N-linked (GlcNAc...) asparagine glycosylation is found at asparagine 86, asparagine 103, and asparagine 123. The Cell attachment site signature appears at 137 to 139 (RGD). A C-type lectin domain is found at 138 to 257 (GDKVYWFCYG…VFICICGKRL (120 aa)). 4 disulfide bridges follow: cysteine 145/cysteine 150, cysteine 163/cysteine 251, cysteine 167/cysteine 253, and cysteine 232/cysteine 245.

In terms of assembly, homodimer; disulfide-linked. In terms of tissue distribution, high, in T-lymphoma lines, very low in normal lymphocytes.

The protein localises to the membrane. Functionally, receptor on natural killer (NK) cells for H-2d alleles. Inhibits the activity of NK cells thus preventing cell lysis. The polypeptide is T-cell surface glycoprotein YE1/48 (Klra1) (Mus musculus (Mouse)).